Consider the following 123-residue polypeptide: Small ribosomal subunit protein uS12 (123 aa).

Asp89 is subject to 3-methylthioaspartic acid. The interval 102–123 (LDTQGVKDRKQGRSKYGAKRPK) is disordered. Residues 113–123 (GRSKYGAKRPK) are compositionally biased toward basic residues.

The protein belongs to the universal ribosomal protein uS12 family. As to quaternary structure, part of the 30S ribosomal subunit. Contacts proteins S8 and S17. May interact with IF1 in the 30S initiation complex.

With S4 and S5 plays an important role in translational accuracy. Its function is as follows. Interacts with and stabilizes bases of the 16S rRNA that are involved in tRNA selection in the A site and with the mRNA backbone. Located at the interface of the 30S and 50S subunits, it traverses the body of the 30S subunit contacting proteins on the other side and probably holding the rRNA structure together. The combined cluster of proteins S8, S12 and S17 appears to hold together the shoulder and platform of the 30S subunit. The sequence is that of Small ribosomal subunit protein uS12 from Magnetococcus marinus (strain ATCC BAA-1437 / JCM 17883 / MC-1).